The following is a 510-amino-acid chain: Internal alternative NAD(P)H-ubiquinone oxidoreductase A1, mitochondrial (510 aa).

The transit peptide at 1–48 (MLWIKNLARISQTTSSSVGNVFRNPESYTLSSRFCTALQKQQVTDTVQ) directs the protein to the mitochondrion. Position 75–105 (75–105 (RVLVLGSGWAGCRVLKGIDTSIYDVVCVSPR)) interacts with FAD. Residue 242–278 (LHCVVVGGGPTGVEFSGELSDFIMKDVRQRYSHVKDD) participates in NAD(+) binding. The Microbody targeting signal signature appears at 501–510 (FVFGRDISRI).

This sequence belongs to the NADH dehydrogenase family. It depends on FAD as a cofactor. As to expression, expressed in seedlings, cotyledons, young leaves, stems and flowers and, to a lower extent, in roots and buds.

The protein resides in the mitochondrion inner membrane. The protein localises to the peroxisome. It carries out the reaction a quinone + NADH + H(+) = a quinol + NAD(+). The catalysed reaction is a ubiquinone + NADH + H(+) = a ubiquinol + NAD(+). Its function is as follows. Alternative NADH-ubiquinone oxidoreductase which catalyzes the oxidation of mitochondrial NADH does not translocate protons across the inner mitochondrial membrane. The polypeptide is Internal alternative NAD(P)H-ubiquinone oxidoreductase A1, mitochondrial (NDA1) (Arabidopsis thaliana (Mouse-ear cress)).